Consider the following 96-residue polypeptide: Large ribosomal subunit protein bL21 (96 aa).

This sequence belongs to the bacterial ribosomal protein bL21 family. In terms of assembly, part of the 50S ribosomal subunit. Contacts protein L20.

This protein binds to 23S rRNA in the presence of protein L20. The polypeptide is Large ribosomal subunit protein bL21 (Chlorobium phaeobacteroides (strain BS1)).